A 151-amino-acid polypeptide reads, in one-letter code: 3-hydroxyacyl-[acyl-carrier-protein] dehydratase FabZ (151 aa).

Residue His54 is part of the active site.

It belongs to the thioester dehydratase family. FabZ subfamily. In terms of assembly, oligomer. The N-terminus is blocked.

It localises to the cytoplasm. The enzyme catalyses a (3R)-hydroxyacyl-[ACP] = a (2E)-enoyl-[ACP] + H2O. Its function is as follows. Involved in unsaturated fatty acids biosynthesis. Catalyzes the dehydration of short chain beta-hydroxyacyl-ACPs and long chain saturated and unsaturated beta-hydroxyacyl-ACPs. The polypeptide is 3-hydroxyacyl-[acyl-carrier-protein] dehydratase FabZ (Escherichia coli (strain SE11)).